The sequence spans 162 residues: Large ribosomal subunit protein uL15 (162 aa).

Residues 1-10 show a composition bias toward basic and acidic residues; sequence MNLNELRDNA. The segment at 1–39 is disordered; sequence MNLNELRDNAGSRYRKKRLGRGIGSGKGKTSGKGVKGQK. Over residues 21–35 the composition is skewed to gly residues; that stretch reads RGIGSGKGKTSGKGV.

It belongs to the universal ribosomal protein uL15 family. In terms of assembly, part of the 50S ribosomal subunit.

Its function is as follows. Binds to the 23S rRNA. In Gluconacetobacter diazotrophicus (strain ATCC 49037 / DSM 5601 / CCUG 37298 / CIP 103539 / LMG 7603 / PAl5), this protein is Large ribosomal subunit protein uL15.